Consider the following 143-residue polypeptide: Endoribonuclease YbeY (143 aa).

Residues His111, His115, and Asp121 each contribute to the Zn(2+) site.

It belongs to the endoribonuclease YbeY family. Requires Zn(2+) as cofactor.

It localises to the cytoplasm. Single strand-specific metallo-endoribonuclease involved in late-stage 70S ribosome quality control and in maturation of the 3' terminus of the 16S rRNA. This is Endoribonuclease YbeY from Cytophaga hutchinsonii (strain ATCC 33406 / DSM 1761 / CIP 103989 / NBRC 15051 / NCIMB 9469 / D465).